The sequence spans 116 residues: MLTIYKREAVVVQLLRPCYKLTLVHYVNTTQQRTDVVKSTTAAVSTNFRGCSNMRSIMRSNGLGDSLSLWKVVCRFPSLLFMNLRSVGPSEPLNARSLISQVLFPIICASVTFLPT.

This is an uncharacterized protein from Saccharomyces cerevisiae (strain ATCC 204508 / S288c) (Baker's yeast).